The sequence spans 121 residues: Small ribosomal subunit protein uS13 (121 aa).

The interval 91–121 is disordered; the sequence is HRKGLPLRGQRTRTNARTRKGPRKAGVALKK.

It belongs to the universal ribosomal protein uS13 family. Part of the 30S ribosomal subunit. Forms a loose heterodimer with protein S19. Forms two bridges to the 50S subunit in the 70S ribosome.

Functionally, located at the top of the head of the 30S subunit, it contacts several helices of the 16S rRNA. In the 70S ribosome it contacts the 23S rRNA (bridge B1a) and protein L5 of the 50S subunit (bridge B1b), connecting the 2 subunits; these bridges are implicated in subunit movement. Contacts the tRNAs in the A and P-sites. In Cupriavidus pinatubonensis (strain JMP 134 / LMG 1197) (Cupriavidus necator (strain JMP 134)), this protein is Small ribosomal subunit protein uS13.